The sequence spans 427 residues: Putative dipeptidase MCYG_02918 (427 aa).

Residues 1 to 29 (MAPERRSRLSDAGILVSLLALTSLVPVQA) form the signal peptide. Zn(2+) contacts are provided by His55, Asp57, and Glu167. Residues Cys106 and Cys196 are joined by a disulfide bond. His194 serves as a coordination point for substrate. The Zn(2+) site is built by His238 and His259. Substrate is bound by residues Arg270 and Asp330. Residue Asn402 is glycosylated (N-linked (GlcNAc...) asparagine).

This sequence belongs to the metallo-dependent hydrolases superfamily. Peptidase M19 family. It depends on Zn(2+) as a cofactor.

It carries out the reaction an L-aminoacyl-L-amino acid + H2O = 2 an L-alpha-amino acid. In terms of biological role, hydrolyzes a wide range of dipeptides. The sequence is that of Putative dipeptidase MCYG_02918 from Arthroderma otae (strain ATCC MYA-4605 / CBS 113480) (Microsporum canis).